Reading from the N-terminus, the 730-residue chain is MAPETAQSQTPETPMRDLQNDAPVTDTLEAGNTDERPSKKAKLDDASTPDNNANNIAPQRMRGVAPVKPEFIIPRATGTEPQPNTDDAAEAARHEGAQGQEAGKKKKKKPTGQNTNRTFGSSQDEKGLCPSRIFTPEFSPGACQWGEKCRFEHDLRTYLKEYKRGDLTTFDGVCPVWDAKGKCLSGWKCRLVGSHMTERETADGRKELVLVEDEERKKKAQPLVPFAVEDGTANIAPIEAKIALNRKKVKTPRADAYGSWLDKTSRELEKVIHNREVHEERGAESKTDQAEREKEDNRAQYLEPPFLPSEKRRIYFGPETPVLAPLTTQGNLPFRRLCIELGAQFTYSEMALSMPLIQGQRGEWALMRAHETEMLPPTISPGADVVQGYDHSKDFRFGAQIAANKHWQALKATEVLSAYTPNLRVIDLNCGCPIDLLFREGAGSALLEHPSKLERILRGMNAVSQEIPITAKIRMGTRDNSPNALKLAERLILGGYESSTLGLGAPGVAALTLHGRSRQQRYTRQADWGYISECAALIKRLNEKTDQVTDTVREPDPRTQPNGGKTWFLGNGDCYSHLDYDDHVNNAGVDTVMVGRGALIKPWLFEEIQAGQYLDKSASERLSLVEKFAKYGLETWGSDEHGVGTTRRFLLEWLSFACRYIPIGLLEYLPPRIQDRPPSWRGRNELETLMGSHNYKDWIKITEMFLGPAHKDFRFEPKHKSNAWEAEAEG.

A compositionally biased stretch (polar residues) spans 1–12 (MAPETAQSQTPE). Residues 1 to 126 (MAPETAQSQT…RTFGSSQDEK (126 aa)) form a disordered region. Positions 33–45 (TDERPSKKAKLDD) are enriched in basic and acidic residues. Composition is skewed to polar residues over residues 48–57 (TPDNNANNIA) and 111–122 (TGQNTNRTFGSS). 2 consecutive C3H1-type zinc fingers follow at residues 123-156 (QDEK…HDLR) and 174-195 (CPVW…VGSH). Residues 274–298 (NREVHEERGAESKTDQAEREKEDNR) show a composition bias toward basic and acidic residues. Residues 274–299 (NREVHEERGAESKTDQAEREKEDNRA) are disordered. FMN contacts are provided by residues 325 to 327 (PLT) and glutamine 400. The Proton donor role is filled by cysteine 432. FMN is bound by residues lysine 472, histidine 514, 571–573 (NGD), and 595–596 (GR).

It belongs to the Dus family. Dus3 subfamily. The cofactor is FMN.

Its subcellular location is the cytoplasm. It localises to the nucleus. It carries out the reaction 5,6-dihydrouridine(47) in tRNA + NAD(+) = uridine(47) in tRNA + NADH + H(+). The catalysed reaction is 5,6-dihydrouridine(47) in tRNA + NADP(+) = uridine(47) in tRNA + NADPH + H(+). The enzyme catalyses a 5,6-dihydrouridine in mRNA + NAD(+) = a uridine in mRNA + NADH + H(+). It catalyses the reaction a 5,6-dihydrouridine in mRNA + NADP(+) = a uridine in mRNA + NADPH + H(+). Catalyzes the synthesis of dihydrouridine, a modified base found in the D-loop of most tRNAs. Specifically modifies U47 in cytoplasmic tRNAs. Catalyzes the synthesis of dihydrouridine in some mRNAs, thereby affecting their translation. This Aspergillus oryzae (strain ATCC 42149 / RIB 40) (Yellow koji mold) protein is tRNA-dihydrouridine(47) synthase [NAD(P)(+)] (dus3).